Reading from the N-terminus, the 441-residue chain is MRRILLSMIVLIFLASPILAKNIVYVAQIKGQITSYTYDQFDRYITIAEQDNAEAIIIELDTPGGRADAMMNIVQRIQQSKIPVIIYVYPPGASAASAGTYIALGSHLIAMAPGTSIGACRPILGYSQNGSIIEAPPKITNYFIAYIKSLAQESGRNATIAEEFITKDLSLTPEEALKYGVIEVVARDINELLKKSNGMKTKIPVNGRYVTLNFTNVEVRYLAPSFKDKLISYITDPNVAYLLLTLGIWALIIGFLTPGWHVPETVGAIMIILAIIGFGYFGYNSAGILLIIVAMLFFIAEALTPTFGLFTVAGLITFIIGGILLFGGGEEYLVRKEVFSQLRILIITVGAILAAFFAFGMAAVIRAHKKKARTGKEEMIGLIGTVVEELNPEGMIKVRGELWKARSKFNGKIEKGEKVRVVDMDGLTLIVVRERKEGGEK.

Residues 1-20 (MRRILLSMIVLIFLASPILA) form the signal peptide. Substrate is bound at residue 64 to 67 (GGRA). The active-site Nucleophile is Ser-97. Residue 119–124 (ACRPIL) coordinates substrate. Lys-138 acts as the Proton donor/acceptor in catalysis. 4 helical membrane passes run 239–259 (VAYLLLTLGIWALIIGFLTPG), 271–291 (IILAIIGFGYFGYNSAGILLI), 307–327 (FGLFTVAGLITFIIGGILLFG), and 344–364 (ILIITVGAILAAFFAFGMAAV).

The protein belongs to the peptidase S14 family. As to quaternary structure, homodimer.

It localises to the membrane. Its activity is regulated as follows. Inhibited by divalent metal cations, including Mg(2+), Mn(2+), Ca(2+) and Zn(2+). Mildly inhibited by 0.01 % SDS and 0.1% dodecyl-beta-D-maltoside. Activity is nearly abolished by 1 % SDS. Functionally, protease that cleaves its substrates preferentially near hydrophobic or aromatic amino acid residues. Can degrade casein and the stomatin homolog PH1511 (in vitro). The chain is Membrane-bound protease PH1510 from Pyrococcus horikoshii (strain ATCC 700860 / DSM 12428 / JCM 9974 / NBRC 100139 / OT-3).